Consider the following 519-residue polypeptide: Flavin-dependent halogenase rdc2 (519 aa).

Residues 1 to 21 form the signal peptide; it reads MSVPKSCTILVAGGGPAGSYA. FAD-binding residues include glycine 14, alanine 17, and glutamate 47. The chloride site is built by serine 324 and glycine 325.

It belongs to the flavin-dependent halogenase family.

Its pathway is secondary metabolite biosynthesis. In terms of biological role, flavin-dependent halogenase; part of the gene cluster that mediates the biosynthesis of radicicol, a resorcylic acid lactone (RAL) that irreversibly inhibits the HSP90 molecular chaperone, an important target for cancer chemotherapy. Within the cluster, rdc2 is involved in the chlorination of the resorcylic acid lactone (RAL) structure to convert monocillin I into radicicol. Also chlorinates monocillin II to produce 6-cholomonocillin II and monocilllin IV to produce 13-chloromonocillin IV. In contrast to most fungal halogenases, rdc2 has a broad substrate specificity and can accept a variety of macrolactones as the substrates to generate chlorinated derivatives, including dihydroresorcylide, zearalenone, curvularin, or even curcumin. Rdc2 is able to dichlorinate dihydroresorcylide and monocillin IV. Dihydroresorcylide is first chlorinated at position 11 to produce 11-chlorodihydroresorcylide which can be further chlorinated by rdc2 at possition 13. Mororeover, rdc2 can incorporate bromine into dihydroresorcylide to yield the corresponding mono- and di-brominated derivatives. Finally, rdc2 is also able to halogenate the isoquinolines 4-hydroxyisoquinoline and 6-hydroxyisoquinoline into 3-chloro-4-hydroxyisoquinoline and 5-chloro-6-hydroxyisoquinoline, respectively. The radicicol cluster encodes only two apparent post-PKS enzymes, a cytochrome P450 monooxygenase (rdc4) and a non-heme halogenase (rdc2) that could introduce the epoxide and the chlorine, respectively. If this cluster includes all the genes required for radicicol biosynthesis, the remaining structural features of radicicol are presumably generated by the PKSs rdc1 and rdc5. The C-2' ketone could arise if the R-PKS rdc5 and NR-PKS rdc1 each carry out four iterations, in contrast to the five iteration-three iteration split for the hypothemycin PKSs. The origin of the cis 5',6' double bond is not known. The radicicol R-PKS rdc5 ER domain may catalyze either double bond isomerization or reduction in the third iteration. This is Flavin-dependent halogenase rdc2 from Metacordyceps chlamydosporia (Nematophagous fungus).